Here is a 225-residue protein sequence, read N- to C-terminus: Pre-mRNA-splicing factor SPF27 (225 aa).

A2 bears the N-acetylalanine mark. S94 carries the post-translational modification Phosphoserine. A coiled-coil region spans residues 138 to 222; sequence YNENLVHMIE…HGEANKENIR (85 aa).

Belongs to the SPF27 family. Component of the pre-catalytic and catalytic spliceosome complexes. Component of the postcatalytic spliceosome P complex. Component of the PRP19-CDC5L splicing complex composed of a core complex comprising a homotetramer of PRPF19, CDC5L, PLRG1 and BCAS2, and at least three less stably associated proteins CTNNBL1, CWC15 and HSPA8. Interacts directly in the complex with PRPF19, CDC5L and PLRG1. As to expression, ubiquitously expressed.

The protein resides in the nucleus. Its subcellular location is the nucleolus. Required for pre-mRNA splicing as component of the activated spliceosome. Component of the PRP19-CDC5L complex that forms an integral part of the spliceosome and is required for activating pre-mRNA splicing. May have a scaffolding role in the spliceosome assembly as it contacts all other components of the core complex. The PRP19-CDC5L complex may also play a role in the response to DNA damage (DDR). In Homo sapiens (Human), this protein is Pre-mRNA-splicing factor SPF27 (BCAS2).